A 75-amino-acid polypeptide reads, in one-letter code: MSNTAPGPTVANKRDEKHRHVVNVVLELPTEISEATHPVLATMLSKYTRMSSLFNDKCAFKLDLLRMVAVSRTRR.

The protein belongs to the herpesviridae small capsomere-interacting protein family. Interacts with the major capsid protein/MCP.

It localises to the virion. The protein localises to the host nucleus. Participates in the assembly of the infectious particles by decorating the outer surface of the capsid shell and thus forming a layer between the capsid and the tegument. Complexes composed of the major capsid protein and small capsomere-interacting protein/SCP assemble together in the host cytoplasm and are translocated to the nucleus, where they accumulate and participate in capsid assembly. This Homo sapiens (Human) protein is Small capsomere-interacting protein.